Consider the following 131-residue polypeptide: UPF0146 protein PYRAB01940 (131 aa).

Belongs to the UPF0146 family.

The chain is UPF0146 protein PYRAB01940 from Pyrococcus abyssi (strain GE5 / Orsay).